We begin with the raw amino-acid sequence, 342 residues long: Transcription initiation factor TFIID subunit 12 (342 aa).

The segment at Met1–Ala221 is disordered. Residues Pro12–Gln35 are compositionally biased toward polar residues. 4 stretches are compositionally biased toward low complexity: residues Pro39 to Pro59, Pro67 to Ala89, Gln96 to Gly146, and Gln180 to Gln192. Positions Gln193 to Met218 are enriched in pro residues. One can recognise a Histone-fold domain in the interval Glu230–Met297.

Belongs to the TAF12 family. Interacts (via histone-fold domain) with taf-4 (via the histone-fold domain). Interaction may facilitate the nuclear localization of taf-4.

It localises to the nucleus. In terms of biological role, part of the general transcription factor complex TFIID. Plays a role in recruiting taf-4 to the nucleus and thereby activating transcription initiation by RNA polymerase II, as part of the TFIID complex. This is Transcription initiation factor TFIID subunit 12 from Caenorhabditis elegans.